Here is a 642-residue protein sequence, read N- to C-terminus: Zinc finger protein 398 (642 aa).

Disordered stretches follow at residues 1-24 (MAEA…QPLP) and 198-225 (EGEH…PGIS). The 72-residue stretch at 143–214 (VAFDDVSIYF…DQAGPEESEI (72 aa)) folds into the KRAB domain. The segment covering 207-220 (AGPEESEIPTDPSE) has biased composition (acidic residues). K265 participates in a covalent cross-link: Glycyl lysine isopeptide (Lys-Gly) (interchain with G-Cter in SUMO2). A C2H2-type 1; atypical zinc finger spans residues 343-364 (FSCHHCGKNLSQDMLLTHQCSH). A C2H2-type 2; degenerate zinc finger spans residues 370–392 (LPCAQCPKHFTPQADLSSTSQDH). 7 consecutive C2H2-type zinc fingers follow at residues 398-420 (PTCP…LRVH), 427-449 (FPCP…RRAH), 455-477 (FRCA…QRGH), 483-505 (FSCP…QMIH), 511-533 (YPCT…RRLH), 539-561 (FSCP…QRIH), and 567-590 (YPCS…RSGH). Residues 587–615 (RSGHNGGCGGDSDPSGQPPNPPGPLITGL) are disordered.

It belongs to the krueppel C2H2-type zinc-finger protein family.

It is found in the nucleus. Functions as a transcriptional activator. The polypeptide is Zinc finger protein 398 (ZNF398) (Homo sapiens (Human)).